The chain runs to 75 residues: Putative snRNP Sm-like protein (75 aa).

Positions 4 to 75 (RPLDVIHRSL…NVLAISPTEE (72 aa)) constitute a Sm domain.

Belongs to the snRNP Sm proteins family.

The sequence is that of Putative snRNP Sm-like protein from Pyrococcus abyssi (strain GE5 / Orsay).